Here is a 193-residue protein sequence, read N- to C-terminus: Adenine phosphoribosyltransferase (193 aa).

It belongs to the purine/pyrimidine phosphoribosyltransferase family. Homodimer.

It is found in the cytoplasm. It carries out the reaction AMP + diphosphate = 5-phospho-alpha-D-ribose 1-diphosphate + adenine. It participates in purine metabolism; AMP biosynthesis via salvage pathway; AMP from adenine: step 1/1. Functionally, catalyzes a salvage reaction resulting in the formation of AMP, that is energically less costly than de novo synthesis. The polypeptide is Adenine phosphoribosyltransferase (Bifidobacterium animalis subsp. lactis (strain AD011)).